A 156-amino-acid chain; its full sequence is MSASLISALPPCGNEPPMPDEWRLYRLATRLSTFANWPFTEDCACTPERMAEAGFVHCPSDNSPDVVKCFFCLKELEGWQPEDDPMDEHKKHSPSCLFIALKKKAEELTLSEFLKLDLERTKIKMQKQMNQHIENFQAKANVVRGHLEKLDADETQ.

Residues 30-100 (RLSTFANWPF…KHSPSCLFIA (71 aa)) form a BIR repeat. The residue at position 46 (Thr46) is a Phosphothreonine; by CDK1. Zn(2+)-binding residues include Cys69, Cys72, His89, and Cys96.

The protein belongs to the IAP family. In terms of assembly, component of the CPC at least composed of survivin/birc5, incenp, cdca8/borealin and/or cdca9/dasra-A, and aurkb/aurora-B. Interacts directly with incenp (via N-terminus). Interacts with rxra; the interaction is stronger in the absence of 9-cis retinoic acids. In terms of processing, ubiquitination is required for centrosome-targeting.

It is found in the cytoplasm. Its subcellular location is the nucleus. It localises to the chromosome. The protein resides in the centromere. The protein localises to the cytoskeleton. It is found in the spindle. Component of the chromosomal passenger complex (CPC), a complex that acts as a key regulator of mitosis. The CPC complex has essential functions at the centromere in ensuring correct chromosome alignment and segregation and is required for chromatin-induced microtubule stabilization and spindle assembly. Does not appear to exhibit anti-apoptotic activity. Plays a role in increasing blood vessel size during development. This chain is Baculoviral IAP repeat-containing protein 5.2 (birc5.2), found in Xenopus tropicalis (Western clawed frog).